The following is a 233-amino-acid chain: ATP synthase subunit a 2 (233 aa).

The next 5 membrane-spanning stretches (helical) occupy residues 15-35 (FVVINATLVYTWLTMALLVIG), 78-98 (YLAFVGTLFLFILTANLLTVV), 107-127 (SLSTTTALAIAVFIAVPIYGI), 169-189 (IMSGNLLAAILLALVPLFVPV), and 194-214 (LGLVFGVIQAYVFAILALVYI).

This sequence belongs to the ATPase A chain family. F-type ATPases have 2 components, CF(1) - the catalytic core - and CF(0) - the membrane proton channel. CF(1) has five subunits: alpha(3), beta(3), gamma(1), delta(1), epsilon(1). CF(0) has four main subunits: a, b, b' and c.

It is found in the cellular thylakoid membrane. Its function is as follows. Key component of the proton channel; it plays a direct role in the translocation of protons across the membrane. This chain is ATP synthase subunit a 2, found in Picosynechococcus sp. (strain ATCC 27264 / PCC 7002 / PR-6) (Agmenellum quadruplicatum).